We begin with the raw amino-acid sequence, 486 residues long: Galactose-1-phosphate uridylyltransferase (486 aa).

Belongs to the galactose-1-phosphate uridylyltransferase type 2 family.

Its subcellular location is the cytoplasm. It carries out the reaction alpha-D-galactose 1-phosphate + UDP-alpha-D-glucose = alpha-D-glucose 1-phosphate + UDP-alpha-D-galactose. The protein operates within carbohydrate metabolism; galactose metabolism. The protein is Galactose-1-phosphate uridylyltransferase of Pediococcus pentosaceus (strain ATCC 25745 / CCUG 21536 / LMG 10740 / 183-1w).